A 272-amino-acid polypeptide reads, in one-letter code: MFDLTGKHVCYVADCGGIALETSKVLMTKNIAKLAILQSTENPQAIAQLQSIKPSTQIFFWTYDVTMAREEMKKYFDEVMVQMDYIDVLINGATLCDENNIDATINTNLTGMMNTVATVLPYMDRQMGGSGGLIVNVTSVIGLDPSPVFCAYSASKFGVIGFTRSLADPLYYSQNGVAVMAVCCGPTRVFVDRELKAFLEYGQSFADRLRRAPCQSTSVCGQNIVNAIERSENGQIWIADKGGLELVKLHWYWHMADQFLHYMQSNDEEDQE.

An NAD(+)-binding site is contributed by Tyr-11 to Leu-34. Ser-139 contacts substrate. Residue Tyr-152 is the Proton acceptor of the active site.

This sequence belongs to the short-chain dehydrogenases/reductases (SDR) family.

This is Alcohol dehydrogenase-related 31 kDa protein (Adhr) from Drosophila teissieri (Fruit fly).